The sequence spans 324 residues: uncharacterized protein (324 aa).

The HTH lysR-type domain maps to 1–58 (MDIKVMEYAAEIARRQSFTKAAEHLHIAQPSLSQQIKKLEAELGLTLFHRSHGSVTLT). The H-T-H motif DNA-binding region spans 18–37 (FTKAAEHLHIAQPSLSQQIK).

It belongs to the LysR transcriptional regulatory family.

This is an uncharacterized protein from Bacillus subtilis (strain 168).